The primary structure comprises 682 residues: Methionine--tRNA ligase (682 aa).

The 'HIGH' region signature appears at 15-25 (PYANGAIHLGH). Zn(2+) is bound by residues Cys-146, Cys-149, Cys-159, and Cys-162. The 'KMSKS' region motif lies at 331 to 335 (KMSKS). Lys-334 lines the ATP pocket. Residues 580–682 (DFAKLDMRVA…SGVTAGMQVK (103 aa)) form the tRNA-binding domain.

The protein belongs to the class-I aminoacyl-tRNA synthetase family. MetG type 1 subfamily. As to quaternary structure, homodimer. Requires Zn(2+) as cofactor.

The protein resides in the cytoplasm. It catalyses the reaction tRNA(Met) + L-methionine + ATP = L-methionyl-tRNA(Met) + AMP + diphosphate. Is required not only for elongation of protein synthesis but also for the initiation of all mRNA translation through initiator tRNA(fMet) aminoacylation. This Haemophilus influenzae (strain ATCC 51907 / DSM 11121 / KW20 / Rd) protein is Methionine--tRNA ligase.